A 240-amino-acid chain; its full sequence is RNA polymerase sigma factor SigI (240 aa).

The Polymerase core binding signature appears at 56-69; sequence DEYSIGLFAFNEAI. The H-T-H motif DNA-binding region spans 194–213; sequence LKHIEPRVRVSRKTLERHRK.

Belongs to the sigma-70 factor family. SigI subfamily. Interacts with RsgI.

The protein localises to the cytoplasm. Negatively regulated by the anti-sigma-I factor RsgI. Functionally, sigma factors are initiation factors that promote the attachment of RNA polymerase to specific initiation sites and are then released. This sigma factor contributes to both stress response and virulence gene expression. This Bacillus anthracis protein is RNA polymerase sigma factor SigI.